A 235-amino-acid chain; its full sequence is Small ribosomal subunit protein eS4 (235 aa).

The region spanning Leu37 to Asn110 is the S4 RNA-binding domain.

This sequence belongs to the eukaryotic ribosomal protein eS4 family.

The protein is Small ribosomal subunit protein eS4 of Methanosarcina mazei (strain ATCC BAA-159 / DSM 3647 / Goe1 / Go1 / JCM 11833 / OCM 88) (Methanosarcina frisia).